The primary structure comprises 179 residues: Large ribosomal subunit protein uL5 (179 aa).

Belongs to the universal ribosomal protein uL5 family. Part of the 50S ribosomal subunit; part of the 5S rRNA/L5/L18/L25 subcomplex. Contacts the 5S rRNA and the P site tRNA. Forms a bridge to the 30S subunit in the 70S ribosome.

Its function is as follows. This is one of the proteins that bind and probably mediate the attachment of the 5S RNA into the large ribosomal subunit, where it forms part of the central protuberance. In the 70S ribosome it contacts protein S13 of the 30S subunit (bridge B1b), connecting the 2 subunits; this bridge is implicated in subunit movement. Contacts the P site tRNA; the 5S rRNA and some of its associated proteins might help stabilize positioning of ribosome-bound tRNAs. The chain is Large ribosomal subunit protein uL5 from Vibrio vulnificus (strain CMCP6).